The sequence spans 23 residues: Defensin D4 (23 aa).

The protein belongs to the DEFL family. Group IV subfamily. Distributed in the epidermal cell layer of leaves and in the subepidermal layer region of stems. Not in roots.

It is found in the secreted. It localises to the cell wall. Antimicrobial peptide. Active against Fusarium spp., Gram-positive and Gram-negative bacterial pathogens. The chain is Defensin D4 from Spinacia oleracea (Spinach).